The sequence spans 248 residues: uncharacterized protein (248 aa).

It belongs to the glycosyltransferase 2 family.

This is an uncharacterized protein from Acanthamoeba polyphaga (Amoeba).